Reading from the N-terminus, the 50-residue chain is PsaJ-like protein asl3190 (50 aa).

A helical transmembrane segment spans residues 21–41 (VLAVISISVAFSTWAIFNYIF).

This sequence belongs to the PsaJ family.

It localises to the cellular thylakoid membrane. In Nostoc sp. (strain PCC 7120 / SAG 25.82 / UTEX 2576), this protein is PsaJ-like protein asl3190.